Here is a 452-residue protein sequence, read N- to C-terminus: UPF0761 membrane protein Bpet3042 (452 aa).

6 helical membrane passes run 56-76 (VLGI…FPVF), 114-134 (LTAI…MTID), 153-173 (ALVY…SLWA), 195-215 (AISF…FVVV), 225-245 (ALVG…AFAY), and 259-279 (AFAT…AVLF).

The protein belongs to the UPF0761 family.

It localises to the cell inner membrane. The protein is UPF0761 membrane protein Bpet3042 of Bordetella petrii (strain ATCC BAA-461 / DSM 12804 / CCUG 43448).